The primary structure comprises 463 residues: L-seryl-tRNA(Sec) selenium transferase (463 aa).

Position 295 is an N6-(pyridoxal phosphate)lysine (Lys-295).

Belongs to the SelA family. Homodecamer; pentamer of dimers. Binds only one seryl-tRNA(Sec) per dimer. It depends on pyridoxal 5'-phosphate as a cofactor.

It localises to the cytoplasm. It carries out the reaction L-seryl-tRNA(Sec) + selenophosphate + H(+) = L-selenocysteinyl-tRNA(Sec) + phosphate. It functions in the pathway aminoacyl-tRNA biosynthesis; selenocysteinyl-tRNA(Sec) biosynthesis; selenocysteinyl-tRNA(Sec) from L-seryl-tRNA(Sec) (bacterial route): step 1/1. Functionally, converts seryl-tRNA(Sec) to selenocysteinyl-tRNA(Sec) required for selenoprotein biosynthesis. This is L-seryl-tRNA(Sec) selenium transferase from Salmonella arizonae (strain ATCC BAA-731 / CDC346-86 / RSK2980).